The primary structure comprises 66 residues: Large ribosomal subunit protein bL31 (66 aa).

Positions 16, 18, 36, and 39 each coordinate Zn(2+).

The protein belongs to the bacterial ribosomal protein bL31 family. Type A subfamily. As to quaternary structure, part of the 50S ribosomal subunit. Zn(2+) serves as cofactor.

Functionally, binds the 23S rRNA. The sequence is that of Large ribosomal subunit protein bL31 from Sulfurovum sp. (strain NBC37-1).